The sequence spans 443 residues: Tubulin beta-2 chain (443 aa).

The short motif at 1-4 is the MREI motif element; sequence MREI. Gln-11, Glu-69, Ser-138, Gly-142, Thr-143, Gly-144, Asn-204, and Asn-226 together coordinate GTP. Glu-69 provides a ligand contact to Mg(2+). A 5-glutamyl polyglutamate modification is found at Glu-438.

This sequence belongs to the tubulin family. As to quaternary structure, dimer of alpha and beta chains. A typical microtubule is a hollow water-filled tube with an outer diameter of 25 nm and an inner diameter of 15 nM. Alpha-beta heterodimers associate head-to-tail to form protofilaments running lengthwise along the microtubule wall with the beta-tubulin subunit facing the microtubule plus end conferring a structural polarity. Microtubules usually have 13 protofilaments but different protofilament numbers can be found in some organisms and specialized cells. Mg(2+) is required as a cofactor. Some glutamate residues at the C-terminus are polyglycylated, resulting in polyglycine chains on the gamma-carboxyl group. Glycylation is mainly limited to tubulin incorporated into axonemes (cilia and flagella) whereas glutamylation is prevalent in neuronal cells, centrioles, axonemes, and the mitotic spindle. Both modifications can coexist on the same protein on adjacent residues, and lowering polyglycylation levels increases polyglutamylation, and reciprocally. The precise function of polyglycylation is still unclear. In terms of processing, some glutamate residues at the C-terminus are polyglutamylated, resulting in polyglutamate chains on the gamma-carboxyl group. Polyglutamylation plays a key role in microtubule severing by spastin (SPAST). SPAST preferentially recognizes and acts on microtubules decorated with short polyglutamate tails: severing activity by SPAST increases as the number of glutamates per tubulin rises from one to eight, but decreases beyond this glutamylation threshold. In terms of tissue distribution, nervous system specific.

The protein resides in the cytoplasm. Its subcellular location is the cytoskeleton. In terms of biological role, tubulin is the major constituent of microtubules, a cylinder consisting of laterally associated linear protofilaments composed of alpha- and beta-tubulin heterodimers. Microtubules grow by the addition of GTP-tubulin dimers to the microtubule end, where a stabilizing cap forms. Below the cap, tubulin dimers are in GDP-bound state, owing to GTPase activity of alpha-tubulin. The sequence is that of Tubulin beta-2 chain (tubb2) from Xenopus laevis (African clawed frog).